We begin with the raw amino-acid sequence, 192 residues long: E3 ubiquitin-protein ligase RNF185 (192 aa).

Residues 1 to 14 (MASKGPSASASTEN) show a composition bias toward polar residues. The tract at residues 1 to 30 (MASKGPSASASTENSSAGGPSGSSNGTGES) is disordered. Residues 1-130 (MASKGPSASA…GGFQGFGFGD (130 aa)) lie on the Cytoplasmic side of the membrane. A compositionally biased stretch (low complexity) spans 15 to 27 (SSAGGPSGSSNGT). Positions 29 to 80 (ESGGQDSTFECNICLDTAKDAVISLCGHLFCWPCLHQWLETRPNRQVCPVCK) are required for ubiquitin ligase activity and protection against ER stress-induced cell death. The segment at 39-80 (CNICLDTAKDAVISLCGHLFCWPCLHQWLETRPNRQVCPVCK) adopts an RING-type zinc-finger fold. Residues 90 to 123 (PLYGRGSTGQQDPREKTPPRPQGQRPEPENRGGF) form a disordered region. A helical membrane pass occupies residues 131–151 (GGFQMSFGIGAFPFGIFATAF). At 152 to 171 (NINDGRPPPAVPGTPQYVDE) the chain is on the mitochondrial intermembrane side. A helical transmembrane segment spans residues 172–192 (QFLSRLFLFVALVIMFWLLIA).

Interacts with ATG5 and BNIP1.

The protein localises to the mitochondrion outer membrane. Its subcellular location is the endoplasmic reticulum membrane. It carries out the reaction S-ubiquitinyl-[E2 ubiquitin-conjugating enzyme]-L-cysteine + [acceptor protein]-L-lysine = [E2 ubiquitin-conjugating enzyme]-L-cysteine + N(6)-ubiquitinyl-[acceptor protein]-L-lysine.. It participates in protein modification; protein ubiquitination. In terms of biological role, E3 ubiquitin-protein ligase that regulates selective mitochondrial autophagy by mediating 'Lys-63'-linked polyubiquitination of BNIP1. Acts in the endoplasmic reticulum (ER)-associated degradation (ERAD) pathway, which targets misfolded proteins that accumulate in the endoplasmic reticulum (ER) for ubiquitination and subsequent proteasome-mediated degradation. Protects cells from ER stress-induced apoptosis. Responsible for the cotranslational ubiquitination and degradation of CFTR in the ERAD pathway. Also acts as a regulator of the innate antiviral response by catalyzing 'Lys-27'-linked polyubiquitination of CGAS, thereby promoting CGAS cyclic GMP-AMP synthase activity. Preferentially associates with the E2 enzymes UBE2J1 and UBE2J2. The polypeptide is E3 ubiquitin-protein ligase RNF185 (Rnf185) (Rattus norvegicus (Rat)).